The sequence spans 24 residues: Probable caffeoyl-CoA O-methyltransferase (24 aa).

The protein belongs to the class I-like SAM-binding methyltransferase superfamily. Cation-dependent O-methyltransferase family. CCoAMT subfamily. The cofactor is a divalent metal cation.

The catalysed reaction is (E)-caffeoyl-CoA + S-adenosyl-L-methionine = (E)-feruloyl-CoA + S-adenosyl-L-homocysteine + H(+). The protein operates within aromatic compound metabolism; phenylpropanoid biosynthesis. Functionally, methylates caffeoyl-CoA to feruloyl-CoA and 5-hydroxyferuloyl-CoA to sinapoyl-CoA. Plays a role in the synthesis of feruloylated polysaccharides. Involved in the reinforcement of the plant cell wall. Also involved in the responding to wounding or pathogen challenge by the increased formation of cell wall-bound ferulic acid polymers. The chain is Probable caffeoyl-CoA O-methyltransferase from Pinus pinaster (Maritime pine).